A 306-amino-acid polypeptide reads, in one-letter code: Tyrosine recombinase XerD (306 aa).

The Core-binding (CB) domain maps to M1–I83. In terms of domain architecture, Tyr recombinase spans K104–L299. Catalysis depends on residues R145, K176, H251, R254, and H277. Y286 serves as the catalytic O-(3'-phospho-DNA)-tyrosine intermediate.

It belongs to the 'phage' integrase family. XerD subfamily. Forms a cyclic heterotetrameric complex composed of two molecules of XerC and two molecules of XerD.

It is found in the cytoplasm. Site-specific tyrosine recombinase, which acts by catalyzing the cutting and rejoining of the recombining DNA molecules. The XerC-XerD complex is essential to convert dimers of the bacterial chromosome into monomers to permit their segregation at cell division. It also contributes to the segregational stability of plasmids. This chain is Tyrosine recombinase XerD, found in Rickettsia conorii (strain ATCC VR-613 / Malish 7).